Consider the following 209-residue polypeptide: Orotate phosphoribosyltransferase (209 aa).

5-phospho-alpha-D-ribose 1-diphosphate-binding positions include Arg96, Lys100, His102, and 122–130 (EDLISTGGS). Ser126 serves as a coordination point for orotate.

This sequence belongs to the purine/pyrimidine phosphoribosyltransferase family. PyrE subfamily. In terms of assembly, homodimer. Mg(2+) is required as a cofactor.

It carries out the reaction orotidine 5'-phosphate + diphosphate = orotate + 5-phospho-alpha-D-ribose 1-diphosphate. It participates in pyrimidine metabolism; UMP biosynthesis via de novo pathway; UMP from orotate: step 1/2. In terms of biological role, catalyzes the transfer of a ribosyl phosphate group from 5-phosphoribose 1-diphosphate to orotate, leading to the formation of orotidine monophosphate (OMP). This chain is Orotate phosphoribosyltransferase, found in Streptococcus pyogenes serotype M3 (strain ATCC BAA-595 / MGAS315).